Here is a 219-residue protein sequence, read N- to C-terminus: MISGVSALPFVRVRQHVNPLAQKYLTPANPLEWEKAYSTPHQPLHLDIGCARGRFVLQMAQVEPNWNFLGLEIRESLVIEANQFRSQLGLTNLHYLYCNANNSLQPLLSSLPTGILQRVTIQFPDPWFKTRHAKRRVVQPELVQDIANYLAVGGVVFLQSDMEFVAVEMCDRFAANPAFKKVGTGEWLTENPLPVATERETTTQNRGEPVYRALFERSS.

S-adenosyl-L-methionine is bound by residues Asp-47, Glu-72, Asn-99, and Asp-125. Residue Asp-125 is part of the active site. Substrate contacts are provided by Lys-129 and Asp-161.

This sequence belongs to the class I-like SAM-binding methyltransferase superfamily. TrmB family.

The catalysed reaction is guanosine(46) in tRNA + S-adenosyl-L-methionine = N(7)-methylguanosine(46) in tRNA + S-adenosyl-L-homocysteine. The protein operates within tRNA modification; N(7)-methylguanine-tRNA biosynthesis. In terms of biological role, catalyzes the formation of N(7)-methylguanine at position 46 (m7G46) in tRNA. The polypeptide is tRNA (guanine-N(7)-)-methyltransferase (Nostoc sp. (strain PCC 7120 / SAG 25.82 / UTEX 2576)).